The chain runs to 181 residues: Shikimate kinase (181 aa).

17-22 contacts ATP; that stretch reads GVGKTT. Thr-21 contacts Mg(2+). Positions 39, 63, and 85 each coordinate substrate. Arg-122 is an ATP binding site. Position 141 (Arg-141) interacts with substrate.

The protein belongs to the shikimate kinase family. Monomer. Requires Mg(2+) as cofactor.

Its subcellular location is the cytoplasm. The catalysed reaction is shikimate + ATP = 3-phosphoshikimate + ADP + H(+). Its pathway is metabolic intermediate biosynthesis; chorismate biosynthesis; chorismate from D-erythrose 4-phosphate and phosphoenolpyruvate: step 5/7. Functionally, catalyzes the specific phosphorylation of the 3-hydroxyl group of shikimic acid using ATP as a cosubstrate. This Nostoc punctiforme (strain ATCC 29133 / PCC 73102) protein is Shikimate kinase.